Here is a 261-residue protein sequence, read N- to C-terminus: L-erythrulose-1-phosphate isomerase (261 aa).

His99 (electrophile) is an active-site residue. Glu172 serves as the catalytic Proton acceptor.

The protein belongs to the triosephosphate isomerase family.

It carries out the reaction L-erythrulose 1-phosphate = D-erythrulose 4-phosphate. It participates in carbohydrate metabolism. Functionally, involved in catabolism of D-apiose. Catalyzes the isomerization of L-erythrulose 1-phosphate to D-erythrulose 4-phosphate. This Rhizobium rhizogenes (strain K84 / ATCC BAA-868) (Agrobacterium radiobacter) protein is L-erythrulose-1-phosphate isomerase.